Consider the following 86-residue polypeptide: Cell division topological specificity factor (86 aa).

Belongs to the MinE family.

Its function is as follows. Prevents the cell division inhibition by proteins MinC and MinD at internal division sites while permitting inhibition at polar sites. This ensures cell division at the proper site by restricting the formation of a division septum at the midpoint of the long axis of the cell. The protein is Cell division topological specificity factor of Shewanella sediminis (strain HAW-EB3).